The sequence spans 158 residues: UPF0225 protein Pfl01_1218 (158 aa).

Belongs to the UPF0225 family.

This chain is UPF0225 protein Pfl01_1218, found in Pseudomonas fluorescens (strain Pf0-1).